Reading from the N-terminus, the 1499-residue chain is MQKREVFGFRKSKVAKTLCGAVLGAALIAIADQQVLADEVTETNSTANVAVTTTGNPATNLPEAQGEATEAASQSQAQAGSKDGALPVEVSADDLNKAVTDAKAAGVNVVQDQTSDKGTATTAAENAQKQAEIKSDYAKQAEEIKKTTEAYKKEVEAHQAETDKINAENKAAEDKYQEDLKAHQAEVEKINTANATAKAEYEAKLAQYQKDLAAVQKANEDSQLDYQNKLSAYQAELARVQKANAEAKEAYEKAVKENTAKNAALQAENEAIKQRNETAKANYDAAMKQYEADLAAIKKAKEDNDADYQAKLAAYQAELARVQKANADAKAAYEKAVEENTAKNTAIQAENEAIKQRNETAKATYEAAVKQYEADLAAVKQANATNEADYQAKLAAYQTELARVQKANADAKATYEKAVEDNKAKNAALQAENEEIKQRNAAAKTDYEAKLAKYEADLAKYKKDFAAYTAALAEAESKKKQDGYLSEPRSQSLNFKSEPNAIRTIDSSVHQYGQQELDALVKSWGISPTNPDRKKSTAYSYFNAINSNNTYAKLVLEKDKPVDVTYTGLKNSSFNGKKISKVVYTYTLKETGFNDGTKMTMFASSDPTVTAWYNDYFTSTNINVKVKFYDEEGQLMNLTGGLVNFSSLNRGNGSGAIDKDAIESVRNFNGRYIPISGSSIKIHENNSAYADSSNAEKSRGARWDTSEWDTTSSPNNWYGAIVGEITQSEISFNMASSKSGNIWFAFNSNINAIGVPTKPVAPTAPTQPMYETEKPLEPAPVVPTYENEPTPPVKTPDQPEPSKPEEPTYETEKPLEPAPVAPTYENEPTPPVKIPDQPEPSKPEEPTYETEKPLEPAPVAPTYENEPTPPVKTPDQPEPSKPEEPTYDPLPTPPLAPTPKQLPTPPVVPTVHFHYSSLLAQPQINKEIKNEDGVDIDRTLVAKQSIVKFELKTEALTAGRPKTTSFVLVDPLPTGYKFDLDATKAASTGFDTTYDEASHTVTFKATDETLATYNADLTKPVETLHPTVVGRVLNDGATYTNNFTLTVNDAYGIKSNVVRVTTPGKPNDPDNPNNNYIKPTKVNKNKEGLNIDGKEVLAGSTNYYELTWDLDQYKGDKSSKEAIQNGFYYVDDYPEEALDVRPDLVKVADEKGNQVSGVSVQQYDSLEAAPKKVQDLLKKANITVKGAFQLFSADNPEEFYKQYVSTGTSLVITDPMTVKSEFGKTGGKYENKAYQIDFGNGYATEVVVNNVPKITPKKDVTVSLDPTSENLDGQTVQLYQTFNYRLIGGLIPQNHSEELEDYSFVDDYDQAGDQYTGNYKTFSSLNLTMKDGSVIKAGTDLTSQTTAETDATNGIVTVRFKEDFLQKISLDSPFQAETYLQMRRIAIGTFENTYVNTVNKVAYASNTVRTTTPIPRTPDKPTPIPTPKPKDPDKPETPKEPKVPSPKVEDPSAPIPVSVGKELTTLPKTGTNDATYMPYLGLAALVGFLGLGLAKRKED.

An N-terminal signal peptide occupies residues 1-37 (MQKREVFGFRKSKVAKTLCGAVLGAALIAIADQQVLA). Residues 50–84 (AVTTTGNPATNLPEAQGEATEAASQSQAQAGSKDG) form a disordered region. 4 Ag I/II A repeats span residues 145 to 219 (KKTT…QKAN), 220 to 301 (EDSQ…KKAK), 302 to 383 (EDND…KQAN), and 384 to 465 (ATNE…KKDF). 3 disordered regions span residues 689 to 709 (YADS…SEWD), 763 to 907 (TAPT…TPPV), and 1409 to 1472 (RTTT…TGTN). Residues 694 to 705 (NAEKSRGARWDT) show a composition bias toward basic and acidic residues. The segment covering 789–799 (PTPPVKTPDQP) has biased composition (pro residues). A compositionally biased stretch (basic and acidic residues) spans 800-815 (EPSKPEEPTYETEKPL). A compositionally biased stretch (pro residues) spans 828 to 838 (PTPPVKIPDQP). The segment covering 839-854 (EPSKPEEPTYETEKPL) has biased composition (basic and acidic residues). 2 stretches are compositionally biased toward pro residues: residues 867 to 877 (PTPPVKTPDQP) and 888 to 907 (DPLP…TPPV). A compositionally biased stretch (basic and acidic residues) spans 1428–1450 (KPKDPDKPETPKEPKVPSPKVED). The short motif at 1466-1470 (LPKTG) is the LPXTG sorting signal element. The residue at position 1469 (Thr-1469) is a Pentaglycyl murein peptidoglycan amidated threonine. A propeptide spans 1470–1499 (GTNDATYMPYLGLAALVGFLGLGLAKRKED) (removed by sortase).

It belongs to the antigen I/II family.

Its subcellular location is the secreted. It localises to the cell wall. The protein localises to the cell surface. Its function is as follows. Adhesin that mediates binding of bacteria to a variety of host cells. Plays a role in the bacterial invasion of dentinal tubules. A host immunostimulatory component, it modulates the innate immunity response. Plays a protective role against some antibiotics and cationic antimicrobial peptides (histatin-5, HTN3, but not beta-defensin 4A, DEFB4A). This chain is Streptococcal surface protein B, found in Streptococcus gordonii (strain Challis / ATCC 35105 / BCRC 15272 / CH1 / DL1 / V288).